The sequence spans 283 residues: Lolitrem B biosynthesis cluster protein S (283 aa).

Residues 1–27 form the signal peptide; that stretch reads MSRSDWIFISLQGFFCLAGVIWKSREG. The next 5 helical transmembrane spans lie at 73–93, 112–132, 157–177, 219–239, and 250–270; these read WFWL…LIIL, LGYL…SLWI, IFWC…VATL, MTGT…ALEA, and VRMF…DVLL.

This sequence belongs to the ltmS family.

The protein resides in the membrane. Part of the gene cluster that mediates the biosynthesis of lolitrems, indole-diterpene mycotoxins that are potent tremorgens in mammals, and are synthesized by clavicipitaceous fungal endophytes in association with their grass hosts. The geranylgeranyl diphosphate (GGPP) synthase ltmG is proposed to catalyze the first step in lolitrem biosynthesis. LtmG catalyzes a series of iterative condensations of isopentenyl diphosphate (IPP) with dimethylallyl diphosphate (DMAPP), geranyl diphosphate (GPP), and farnesyl diphosphate (FPP), to form GGPP. GGPP then condenses with indole-3-glycerol phosphate to form 3-geranylgeranylindole, an acyclic intermediate, to be incorporated into paxilline. Either ltmG or ltmC could be responsible for this step, as both are putative prenyl transferases. The FAD-dependent monooxygenase ltmM then catalyzes the epoxidation of the two terminal alkenes of the geranylgeranyl moiety, which is subsequently cyclized by ltmB, to paspaline. The cytochrome P450 monooxygenases ltmQ and ltmP can sequentially oxidize paspaline to terpendole E and terpendole F. Alternatively, ltmP converts paspaline to an intermediate which is oxidized by ltmQ to terpendole F. LtmF, ltmK, ltmE and ltmJ appear to be unique to the epichloe endophytes. The prenyltransferase ltmF is involved in the 27-hydroxyl-O-prenylation. The cytochrome P450 monooxygenase ltmK is required for the oxidative acetal ring formation. The multi-functional prenyltransferase ltmE is required for C20- and C21-prenylations of the indole ring of paspalanes and acts together with the cytochrome P450 monooxygenase ltmJ to yield lolitremanes by multiple oxidations and ring closures. The stereoisomer pairs of lolitriol and lolitrem N or lolitrem B and lolitrem F may be attributed to variations in the way in which ring closure can occur under the action of ltmJ. While the major product of this pathway is lolitrem B, the prenyl transferases and cytochrome P450 monooxygenases identified in this pathway have a remarkable versatility in their regio- and stereo-specificities to generate a diverse range of metabolites that are products of a metabolic grid rather than a linear pathway. The protein is Lolitrem B biosynthesis cluster protein S of Epichloe festucae (strain Fl1).